The following is a 172-amino-acid chain: Stellate protein CG33239/CG33241 (172 aa).

This sequence belongs to the casein kinase 2 subunit beta family. Interacts in vitro with the casein kinase 2 alpha subunit (CkII-alpha). The relevance of such interaction is however unclear in vivo. As to expression, probably not expressed in wild-type flies. In males lacking the Y chromosome, it is testis-specific and constitutes the main component of star-shaped crystals.

Functionally, unknown. In males lacking the Y chromosome, its strong overexpression leads to the appearance of proteinaceous star-shaped crystals in the primary spermatocytes causing meiotic drive, possibly by interfering with normal casein kinase 2 activity. The chain is Stellate protein CG33239/CG33241 (Ste:CG33239) from Drosophila melanogaster (Fruit fly).